Here is a 443-residue protein sequence, read N- to C-terminus: MEKLASLYHHHLATLQARAQTVLARHQLDALLIHSGELLTVFLDDHDYPFKVNPQFKAWVPVTQVPNCWLWVDGVNPPKLWFYSPVDYWHNVAPVPESFWTEEIDITVLRNADDIGQLLPSQRERVAYIGYAPQRAQDLGIRADNINPQSVLDYLHYHRAYKTDYELACMREAQKTAVIGHRAAHEAFLSGMSEFDINLAYLTATGHRDIDVPYGNIVALNEHAAVLHYTQLDHHAPSDVRSFLIDAGAEYNGYAADLTRTYSAQSDGAFALLIKDLNQEMLALIDTVQAGVRYTDYHIQMHQRIAKLLKSHQLVRDISEEAMVEQGLTSPFLPHGLGHPLGLQVHDVAGFMQDDRGTHLAAPSQYPYLRCTRVLEPGMVMTIEPGIYFIESLLAPWREGELCQHFDWQKVDALKPFGGIRIEDNIVIHDGRVENMTRDLNLA.

D246, D257, H339, E384, and E423 together coordinate Mn(2+).

This sequence belongs to the peptidase M24B family. Bacterial-type prolidase subfamily. It depends on Mn(2+) as a cofactor.

It carries out the reaction Xaa-L-Pro dipeptide + H2O = an L-alpha-amino acid + L-proline. Splits dipeptides with a prolyl residue in the C-terminal position. This chain is Xaa-Pro dipeptidase, found in Pectobacterium carotovorum subsp. carotovorum (strain PC1).